The chain runs to 399 residues: Elongation factor Tu (399 aa).

Positions 10–209 (KPHVNIGTIG…AVDSYIPTPV (200 aa)) constitute a tr-type G domain. The segment at 19-26 (GHVDHGKT) is G1. A GTP-binding site is contributed by 19–26 (GHVDHGKT). A Mg(2+)-binding site is contributed by T26. Residues 60–64 (GITIA) form a G2 region. Residues 81 to 84 (DCPG) form a G3 region. Residues 81–85 (DCPGH) and 136–139 (NKAD) contribute to the GTP site. A G4 region spans residues 136–139 (NKAD). Positions 174–176 (SAL) are G5.

It belongs to the TRAFAC class translation factor GTPase superfamily. Classic translation factor GTPase family. EF-Tu/EF-1A subfamily. Monomer.

It localises to the cytoplasm. It carries out the reaction GTP + H2O = GDP + phosphate + H(+). In terms of biological role, GTP hydrolase that promotes the GTP-dependent binding of aminoacyl-tRNA to the A-site of ribosomes during protein biosynthesis. In Campylobacter fetus subsp. fetus (strain 82-40), this protein is Elongation factor Tu.